Here is a 289-residue protein sequence, read N- to C-terminus: Arabinogalactan O-methyltransferase 1 (289 aa).

Residues 12-32 form a helical membrane-spanning segment; that stretch reads IITGVLLAGLVGGALLFTSFI.

This sequence belongs to the methyltransferase superfamily. As to quaternary structure, binds to the translation initiation factors TIF3E1.

Its subcellular location is the golgi apparatus membrane. Involved in the methylation of glucuronic acid of different plant cell wall component, but mainly on side chains of arabinogalactans. This is Arabinogalactan O-methyltransferase 1 (AGM1) from Arabidopsis thaliana (Mouse-ear cress).